We begin with the raw amino-acid sequence, 309 residues long: Methionyl-tRNA formyltransferase (309 aa).

S112–P115 serves as a coordination point for (6S)-5,6,7,8-tetrahydrofolate.

Belongs to the Fmt family.

It carries out the reaction L-methionyl-tRNA(fMet) + (6R)-10-formyltetrahydrofolate = N-formyl-L-methionyl-tRNA(fMet) + (6S)-5,6,7,8-tetrahydrofolate + H(+). Its function is as follows. Attaches a formyl group to the free amino group of methionyl-tRNA(fMet). The formyl group appears to play a dual role in the initiator identity of N-formylmethionyl-tRNA by promoting its recognition by IF2 and preventing the misappropriation of this tRNA by the elongation apparatus. This chain is Methionyl-tRNA formyltransferase, found in Bartonella tribocorum (strain CIP 105476 / IBS 506).